The primary structure comprises 309 residues: tRNA hydroxylation protein P2 (309 aa).

It belongs to the peptidase U32 family.

Its function is as follows. Involved in prephenate-dependent formation of 5-hydroxyuridine (ho5U) modification at position 34 in tRNAs, the first step in 5-methoxyuridine (mo5U) biosynthesis. The sequence is that of tRNA hydroxylation protein P2 from Bacillus subtilis (strain 168).